The sequence spans 74 residues: Tetrahydromethanopterin S-methyltransferase subunit G (74 aa).

A helical transmembrane segment spans residues 47–67 (VGIAYGLAIGFIFVYVLGTVL).

Belongs to the MtrG family. The complex is composed of 8 subunits; MtrA, MtrB, MtrC, MtrD, MtrE, MtrF, MtrG and MtrH.

It localises to the cell membrane. It catalyses the reaction 5-methyl-5,6,7,8-tetrahydromethanopterin + coenzyme M + 2 Na(+)(in) = 5,6,7,8-tetrahydromethanopterin + methyl-coenzyme M + 2 Na(+)(out). It functions in the pathway one-carbon metabolism; methanogenesis from CO(2); methyl-coenzyme M from 5,10-methylene-5,6,7,8-tetrahydromethanopterin: step 2/2. Part of a complex that catalyzes the formation of methyl-coenzyme M and tetrahydromethanopterin from coenzyme M and methyl-tetrahydromethanopterin. This is an energy-conserving, sodium-ion translocating step. This chain is Tetrahydromethanopterin S-methyltransferase subunit G, found in Methanococcus maripaludis (strain DSM 14266 / JCM 13030 / NBRC 101832 / S2 / LL).